The following is a 622-amino-acid chain: Low affinity potassium transport system protein Kup (622 aa).

The next 12 helical transmembrane spans lie at 9-29, 49-69, 103-123, 137-157, 165-185, 213-233, 247-267, 276-296, 337-357, 363-383, 396-416, and 419-439; these read LSAI…TSPL, VFGF…IKYL, VIMG…TPAI, PELD…LFMI, VGKL…GLGL, VSFI…ALYA, WFSV…ALLL, PFFL…AALA, IYIP…IVSF, LAAA…ILST, FVAL…SANL, and LLSG…IMTT.

This sequence belongs to the HAK/KUP transporter (TC 2.A.72) family.

Its subcellular location is the cell inner membrane. The enzyme catalyses K(+)(in) + H(+)(in) = K(+)(out) + H(+)(out). Its function is as follows. Responsible for the low-affinity transport of potassium into the cell. Likely operates as a K(+):H(+) symporter. This is Low affinity potassium transport system protein Kup from Citrobacter koseri (strain ATCC BAA-895 / CDC 4225-83 / SGSC4696).